Consider the following 474-residue polypeptide: GTPase Der (474 aa).

EngA-type G domains are found at residues 2–166 and 212–385; these read LRIA…NVPE and LKIA…TTVS. Residues 8-15, 55-59, 118-121, 218-225, 265-269, and 330-333 contribute to the GTP site; these read GRPNVGKS, DTGGV, NKAD, DTAGL, and NKWD. Residues 386 to 470 form the KH-like domain; the sequence is SKVPTPVVNK…PFDLEFKEKT (85 aa).

This sequence belongs to the TRAFAC class TrmE-Era-EngA-EngB-Septin-like GTPase superfamily. EngA (Der) GTPase family. Associates with the 50S ribosomal subunit.

Its function is as follows. GTPase that plays an essential role in the late steps of ribosome biogenesis. The polypeptide is GTPase Der (Chlamydia abortus (strain DSM 27085 / S26/3) (Chlamydophila abortus)).